We begin with the raw amino-acid sequence, 230 residues long: Ribonuclease 3 (230 aa).

Positions 5–125 constitute an RNase III domain; the sequence is YSRFYNILGY…VIGAIYLDSD (121 aa). Residue E40 participates in Mg(2+) binding. The active site involves D44. Residues D111 and E114 each contribute to the Mg(2+) site. Residue E114 is part of the active site. Residues 153–223 enclose the DRBM domain; sequence DSKSKLQEIL…AEKMIEMLSQ (71 aa).

The protein belongs to the ribonuclease III family. Homodimer. Mg(2+) is required as a cofactor.

The protein resides in the cytoplasm. The catalysed reaction is Endonucleolytic cleavage to 5'-phosphomonoester.. Its function is as follows. Digests double-stranded RNA. Involved in the processing of primary rRNA transcript to yield the immediate precursors to the large and small rRNAs (23S and 16S). Processes some mRNAs, and tRNAs when they are encoded in the rRNA operon. Processes pre-crRNA and tracrRNA of type II CRISPR loci if present in the organism. This chain is Ribonuclease 3, found in Francisella tularensis subsp. holarctica (strain FTNF002-00 / FTA).